The following is a 232-amino-acid chain: GFP-like non-fluorescent chromoprotein FP595 (232 aa).

A cross-link (2-iminomethyl-5-imidazolinone (Met-Gly)) is located at residues 63 to 65 (MYG). Position 64 is a (E)-2,3-didehydrotyrosine (Y64).

Belongs to the GFP family. Contains a chromophore consisting of modified amino acid residues. The chromophore is formed by autocatalytic backbone condensation between Xaa-N and Gly-(N+2), oxidation of Tyr-(N+1) to didehydrotyrosine, and formation of a double bond to the alpha-amino nitrogen of residue Tyr-(N+1). Maturation of the chromophore requires nothing other than molecular oxygen. In terms of tissue distribution, tentacle tips.

In terms of biological role, pigment protein that is intensely purple in color. This chain is GFP-like non-fluorescent chromoprotein FP595, found in Anemonia sulcata (Mediterranean snakelocks sea anemone).